A 40-amino-acid polypeptide reads, in one-letter code: MANTTGRIPLWLIGTVAGILVLGLLGIFFYGSYSGLGSSL.

The chain crosses the membrane as a helical span at residues 8–28 (IPLWLIGTVAGILVLGLLGIF).

It belongs to the PsbJ family. As to quaternary structure, PSII is composed of 1 copy each of membrane proteins PsbA, PsbB, PsbC, PsbD, PsbE, PsbF, PsbH, PsbI, PsbJ, PsbK, PsbL, PsbM, PsbT, PsbX, PsbY, PsbZ, Psb30/Ycf12, at least 3 peripheral proteins of the oxygen-evolving complex and a large number of cofactors. It forms dimeric complexes.

The protein localises to the plastid. Its subcellular location is the chloroplast thylakoid membrane. In terms of biological role, one of the components of the core complex of photosystem II (PSII). PSII is a light-driven water:plastoquinone oxidoreductase that uses light energy to abstract electrons from H(2)O, generating O(2) and a proton gradient subsequently used for ATP formation. It consists of a core antenna complex that captures photons, and an electron transfer chain that converts photonic excitation into a charge separation. This is Photosystem II reaction center protein J from Physcomitrium patens (Spreading-leaved earth moss).